Here is a 525-residue protein sequence, read N- to C-terminus: DEAD-box ATP-dependent RNA helicase CshA (525 aa).

A Q motif motif is present at residues 2 to 30 (TTFRELGLSDSLLQSVESMGFEEATPIQA). Residues 33–203 (IPHALQGKDI…ERFMTEPQHI (171 aa)) enclose the Helicase ATP-binding domain. Residue 46-53 (AQTGTGKT) participates in ATP binding. Residues 151-154 (DEAD) carry the DEAD box motif. In terms of domain architecture, Helicase C-terminal spans 214-374 (NIQQFYLEVQ…RMDAPTLDEA (161 aa)). The interval 428 to 525 (TTPIALTSEP…RKHHSRKPQA (98 aa)) is disordered. A compositionally biased stretch (basic and acidic residues) spans 458-503 (DGNRNRSRDGRGGDGRNRDRNRDGRNRDGNRDRNRDGGNRGRRGEG). Over residues 515–525 (ERKHHSRKPQA) the composition is skewed to basic residues.

It belongs to the DEAD box helicase family. CshA subfamily. In terms of assembly, oligomerizes, may be a member of the RNA degradosome.

The protein resides in the cytoplasm. It catalyses the reaction ATP + H2O = ADP + phosphate + H(+). In terms of biological role, DEAD-box RNA helicase possibly involved in RNA degradation. Unwinds dsRNA in both 5'- and 3'-directions, has RNA-dependent ATPase activity. This chain is DEAD-box ATP-dependent RNA helicase CshA, found in Bacillus cereus (strain ATCC 10987 / NRS 248).